The sequence spans 735 residues: Translation initiation factor IF-2 (735 aa).

2 stretches are compositionally biased toward basic and acidic residues: residues 52 to 66 and 101 to 117; these read VNSE…EKPK and KGKE…EKKL. Positions 52 to 154 are disordered; it reads VNSEKKAEKK…PAKKEKELPK (103 aa). Positions 121–133 are enriched in basic residues; that stretch reads AKKKGKGPMKGKK. The segment covering 134–145 has biased composition (low complexity); it reads QAAPASKQAQQP. Residues 236–405 enclose the tr-type G domain; that stretch reads ERPPVVTIMG…LLVSEMEELK (170 aa). Residues 245–252 form a G1 region; it reads GHVDHGKT. Residue 245 to 252 coordinates GTP; the sequence is GHVDHGKT. A G2 region spans residues 270–274; it reads GITQH. The interval 291–294 is G3; that stretch reads DTPG. GTP is bound by residues 291–295 and 345–348; these read DTPGH and NKMD. The segment at 345–348 is G4; that stretch reads NKMD. Residues 381-383 form a G5 region; it reads SAK.

Belongs to the TRAFAC class translation factor GTPase superfamily. Classic translation factor GTPase family. IF-2 subfamily.

The protein resides in the cytoplasm. Its function is as follows. One of the essential components for the initiation of protein synthesis. Protects formylmethionyl-tRNA from spontaneous hydrolysis and promotes its binding to the 30S ribosomal subunits. Also involved in the hydrolysis of GTP during the formation of the 70S ribosomal complex. The sequence is that of Translation initiation factor IF-2 from Geobacillus thermodenitrificans (strain NG80-2).